A 135-amino-acid chain; its full sequence is Sex-regulated protein janus-A (135 aa).

Lys37 lines the substrate pocket. His63 serves as the catalytic Proton acceptor. Residue 104 to 106 (SQG) coordinates substrate.

Belongs to the janus family.

Its function is as follows. JanA and janB regulate somatic sex differentiation. The protein is Sex-regulated protein janus-A (janA) of Drosophila erecta (Fruit fly).